The sequence spans 85 residues: Elongation factor 1-beta (85 aa).

Belongs to the EF-1-beta/EF-1-delta family.

Promotes the exchange of GDP for GTP in EF-1-alpha/GDP, thus allowing the regeneration of EF-1-alpha/GTP that could then be used to form the ternary complex EF-1-alpha/GTP/AAtRNA. This Methanoregula boonei (strain DSM 21154 / JCM 14090 / 6A8) protein is Elongation factor 1-beta.